Reading from the N-terminus, the 209-residue chain is Casparian strip membrane protein 1 (209 aa).

At 1–46 (MSSGANATTIDVPETRAEAKGKAPLIAAPIVATTKATPHPNAGWKK) the chain is on the cytoplasmic side. A helical transmembrane segment spans residues 47-67 (GLAIFDFLLRLAAIAATLAAA). The Extracellular portion of the chain corresponds to 68 to 95 (TTMGTTDETLPFFTQFFQFQASFDDLPA). Residues 96-116 (FMFFVVATAIASGYLALSLPF) form a helical membrane-spanning segment. The Cytoplasmic portion of the chain corresponds to 117–137 (SLVSIFRPHAQGIRLLLIISD). The chain crosses the membrane as a helical span at residues 138–158 (TVMLALTTAGAASATAIVYLA). Over 159 to 183 (HNGDSSANWIAICQQFTDFCQSVSG) the chain is Extracellular. A helical membrane pass occupies residues 184–204 (AVVASFIAVVIFMLLVMMSAL). Over 205–209 (ALRKH) the chain is Cytoplasmic.

This sequence belongs to the Casparian strip membrane proteins (CASP) family. In terms of assembly, homodimer and heterodimers.

The protein localises to the cell membrane. Functionally, regulates membrane-cell wall junctions and localized cell wall deposition. Required for establishment of the Casparian strip membrane domain (CSD) and the subsequent formation of Casparian strips, a cell wall modification of the root endodermis that determines an apoplastic barrier between the intraorganismal apoplasm and the extraorganismal apoplasm and prevents lateral diffusion. The sequence is that of Casparian strip membrane protein 1 from Vitis vinifera (Grape).